A 346-amino-acid chain; its full sequence is Holliday junction branch migration complex subunit RuvB (346 aa).

Residues 1 to 11 are compositionally biased toward polar residues; that stretch reads MTEQRTIASSA. Residues 1–20 form a disordered region; the sequence is MTEQRTIASSATREDEAADA. The interval 1 to 183 is large ATPase domain (RuvB-L); the sequence is MTEQRTIASS…FGIVQRLEFY (183 aa). ATP is bound by residues I22, R23, G64, K67, T68, T69, 130–132, R173, Y183, and R220; that span reads EDF. T68 lines the Mg(2+) pocket. The small ATPAse domain (RuvB-S) stretch occupies residues 184 to 254; sequence SPQELTRIVI…VAQAAMQMLK (71 aa). The head domain (RuvB-H) stretch occupies residues 257-346; sequence PEGFDELDRR…PAIGEPGDLF (90 aa). R293, R312, and R317 together coordinate DNA.

Belongs to the RuvB family. In terms of assembly, homohexamer. Forms an RuvA(8)-RuvB(12)-Holliday junction (HJ) complex. HJ DNA is sandwiched between 2 RuvA tetramers; dsDNA enters through RuvA and exits via RuvB. An RuvB hexamer assembles on each DNA strand where it exits the tetramer. Each RuvB hexamer is contacted by two RuvA subunits (via domain III) on 2 adjacent RuvB subunits; this complex drives branch migration. In the full resolvosome a probable DNA-RuvA(4)-RuvB(12)-RuvC(2) complex forms which resolves the HJ.

The protein localises to the cytoplasm. The enzyme catalyses ATP + H2O = ADP + phosphate + H(+). Its function is as follows. The RuvA-RuvB-RuvC complex processes Holliday junction (HJ) DNA during genetic recombination and DNA repair, while the RuvA-RuvB complex plays an important role in the rescue of blocked DNA replication forks via replication fork reversal (RFR). RuvA specifically binds to HJ cruciform DNA, conferring on it an open structure. The RuvB hexamer acts as an ATP-dependent pump, pulling dsDNA into and through the RuvAB complex. RuvB forms 2 homohexamers on either side of HJ DNA bound by 1 or 2 RuvA tetramers; 4 subunits per hexamer contact DNA at a time. Coordinated motions by a converter formed by DNA-disengaged RuvB subunits stimulates ATP hydrolysis and nucleotide exchange. Immobilization of the converter enables RuvB to convert the ATP-contained energy into a lever motion, pulling 2 nucleotides of DNA out of the RuvA tetramer per ATP hydrolyzed, thus driving DNA branch migration. The RuvB motors rotate together with the DNA substrate, which together with the progressing nucleotide cycle form the mechanistic basis for DNA recombination by continuous HJ branch migration. Branch migration allows RuvC to scan DNA until it finds its consensus sequence, where it cleaves and resolves cruciform DNA. The chain is Holliday junction branch migration complex subunit RuvB from Xanthomonas campestris pv. campestris (strain B100).